Consider the following 386-residue polypeptide: MGSIGAASMEFCFDVFKELKVHHANENIFYCPIAIMSALAMVYLGAKDSTRTQINKVVRFDKLPGFGDSIEAQCGTSVNVHSSLRDILNQITKPNDVYSFSLASRLYAEERYPILPEYLQCVKELYRGGLEPINFQTAADQARELINSWVESQTNGIIRNVLQPSSVDSQTAMVLVNAIVFKGLWEKAFKDEDTQAMPFRVTEQESKPVQMMYQIGLFRVASMASEKMKILELPFASGTMSMLVLLPDEVSGLEQLESIINFEKLTEWTSSNVMEERKIKVYLPRMKMEEKYNLTSVLMAMGITDVFSSSANLSGISSAESLKISQAVHAAHAEINEAGREVVGSAEAGVDAASVSEEFRADHPFLFCIKHIATNAVLFFGRCVSP.

G2 bears the N-acetylglycine mark. Positions 22-48 form a signal peptide, not cleaved; that stretch reads HHANENIFYCPIAIMSALAMVYLGAKD. Residue S69 is modified to Phosphoserine. C74 and C121 are oxidised to a cystine. E192 is a Ca(2+) binding site. An N-linked (GlcNAc...) asparagine glycan is attached at N293. S345 is modified (phosphoserine).

This sequence belongs to the serpin family. Ov-serpin subfamily. In terms of assembly, homodimer. Post-translationally, undergoes proteolytic cleavage first at the canonical P1-P1' site, and then at the P8-P7 site by subtilisin. In terms of tissue distribution, major protein of egg white. Expressed in the magnum of the oviduct (at protein level).

It localises to the secreted. Its function is as follows. Non-inhibitory serpin. Storage protein of egg white. This Gallus gallus (Chicken) protein is Ovalbumin (SERPINB14).